The sequence spans 467 residues: Putative serine/threonine-protein kinase R400 (467 aa).

The 369-residue stretch at 99–467 (GVKLIYIKSG…STGQKPTKKV (369 aa)) folds into the Protein kinase domain. Residues 105 to 113 (IKSGTTGHT) and lysine 129 each bind ATP. The Proton acceptor role is filled by aspartate 272. Positions 443–467 (LFQQGNGSKQPVPKKSTGQKPTKKV) are disordered. The segment covering 458 to 467 (STGQKPTKKV) has biased composition (polar residues).

Belongs to the protein kinase superfamily. Ser/Thr protein kinase family.

Its subcellular location is the virion. It carries out the reaction L-seryl-[protein] + ATP = O-phospho-L-seryl-[protein] + ADP + H(+). The catalysed reaction is L-threonyl-[protein] + ATP = O-phospho-L-threonyl-[protein] + ADP + H(+). The protein is Putative serine/threonine-protein kinase R400 of Acanthamoeba polyphaga mimivirus (APMV).